Reading from the N-terminus, the 885-residue chain is Conidiophore development regulator abaA (885 aa).

Residues 1 to 20 show a composition bias toward polar residues; that stretch reads MSSLFQPRPVLSSQRYSQSP. Residues 1 to 25 are disordered; the sequence is MSSLFQPRPVLSSQRYSQSPDYVDT. Residues 124–217 constitute a DNA-binding region (TEA); sequence QKDKGGVWRR…QVVKKFFEDL (94 aa). 2 disordered regions span residues 502–539 and 817–885; these read KEKR…WTRR and APGS…TAGW. Composition is skewed to basic and acidic residues over residues 508 to 521 and 831 to 840; these read YADG…ERAG and VESHAGDHHG.

This sequence belongs to the TEC1 family.

The protein localises to the nucleus. BrlA, abaA and wetA are pivotal regulators of conidiophore development and conidium maturation. They act individually and together to regulate their own expression and that of numerous other sporulation-specific genes. BrlA, abaA and wetA act together to positively regulate the expression of the Pks1 gene cluster that mediates the biosynthesis of an anthraquinone derivative pigment that contributes to conidial pigmentation that provides protection from UV radiation, heat and cold stress. The polypeptide is Conidiophore development regulator abaA (Metarhizium robertsii (strain ARSEF 23 / ATCC MYA-3075) (Metarhizium anisopliae (strain ARSEF 23))).